We begin with the raw amino-acid sequence, 160 residues long: Protein max (160 aa).

The segment covering 1–13 has biased composition (acidic residues); that stretch reads MSDNDDIEVESDE. The disordered stretch occupies residues 1–40; sequence MSDNDDIEVESDEEQPRFQSAADKRAHHNALERKRRDHIK. Position 2 is an N-acetylserine (Ser2). Ser2 and Ser11 each carry phosphoserine. The bHLH domain occupies 23–74; it reads DKRAHHNALERKRRDHIKDSFHSLRDSVPSLQGEKASRAQILDKATEYIQYM. A compositionally biased stretch (basic and acidic residues) spans 29 to 40; the sequence is NALERKRRDHIK. An N6-acetyllysine modification is found at Lys66. Positions 81 to 102 are leucine-zipper; the sequence is HQQDIDDLKRQNALLEQQVRAL. The segment at 104 to 160 is disordered; that stretch reads KARSSAQLQTNYPSSDNSLYTNAKGGTISAFDGGSDSSSESEPEEPQSRKKLRMEAS. Phosphoserine is present on Ser107. Positions 107–124 are enriched in polar residues; the sequence is SSAQLQTNYPSSDNSLYT. 2 positions are modified to N6-acetyllysine: Lys153 and Lys154.

The protein belongs to the MAX family. Efficient DNA binding requires dimerization with another bHLH protein. Binds DNA as a heterodimer with MYC or MAD. Part of the E2F6.com-1 complex in G0 phase composed of E2F6, MGA, MAX, TFDP1, CBX3, BAT8, EUHMTASE1, RING1, RNF2, MBLR, L3MBTL2 and YAF2. Component of some MLL1/MLL complex, at least composed of the core components KMT2A/MLL1, ASH2L, HCFC1/HCF1, WDR5 and RBBP5, as well as the facultative components BACC1, CHD8, E2F6, HSP70, INO80C, KANSL1, LAS1L, MAX, MCRS1, MGA, MYST1/MOF, PELP1, PHF20, PRP31, RING2, RUVB1/TIP49A, RUVB2/TIP49B, SENP3, TAF1, TAF4, TAF6, TAF7, TAF9 and TEX10. Interacts with SPAG9. The heterodimer MYC:MAX interacts with ABI1; the interaction may enhance MYC:MAX transcriptional activity. Phosphorylated.

It is found in the nucleus. The protein resides in the cell projection. The protein localises to the dendrite. Transcription regulator. Forms a sequence-specific DNA-binding protein complex with MYC or MAD which recognizes the core sequence 5'-CAC[GA]TG-3'. The MYC:MAX complex is a transcriptional activator, whereas the MAD:MAX complex is a repressor. CpG methylation of the recognition site greatly inhibits DNA binding, suggesting that DNA methylation may regulate the MYC:MAX complex in vivo. May repress transcription via the recruitment of a chromatin remodeling complex containing H3 'Lys-9' histone methyltransferase activity. Represses MYC transcriptional activity from E-box elements. In Mus musculus (Mouse), this protein is Protein max.